Consider the following 230-residue polypeptide: Lipopolysaccharide core heptose(II) kinase WaaY (230 aa).

This sequence belongs to the protein kinase superfamily. RfaY/WaaY family.

It catalyses the reaction alpha-D-Glc-(1-&gt;3)-[L-alpha-D-Hep-(1-&gt;7)]-L-alpha-D-Hep-(1-&gt;3)-4-O-PO3(2-)-L-alpha-D-Hep-(1-&gt;5)-[alpha-Kdo-(2-&gt;4)]-alpha-Kdo-(2-&gt;6)-lipid A + ATP = alpha-D-Glc-(1-&gt;3)-[L-alpha-D-Hep-(1-&gt;7)]-4-O-PO3(2-)-L-alpha-D-Hep-(1-&gt;3)-4-O-PO3(2-)-L-alpha-D-Hep-(1-&gt;5)-[alpha-Kdo-(2-&gt;4)]-alpha-Kdo-(2-&gt;6)-lipid A + ADP + H(+). Its pathway is bacterial outer membrane biogenesis; LPS core biosynthesis. Kinase involved in the biosynthesis of the core oligosaccharide region of lipopolysaccharide (LPS). Catalyzes the phosphorylation of the second heptose unit (HepII) of the inner core. This Escherichia coli protein is Lipopolysaccharide core heptose(II) kinase WaaY.